The chain runs to 246 residues: Electron transfer flavoprotein beta subunit lysine methyltransferase (246 aa).

Belongs to the methyltransferase superfamily. ETFBKMT family.

It is found in the cytoplasm. The protein localises to the mitochondrion matrix. The catalysed reaction is L-lysyl-[protein] + 3 S-adenosyl-L-methionine = N(6),N(6),N(6)-trimethyl-L-lysyl-[protein] + 3 S-adenosyl-L-homocysteine + 3 H(+). Functionally, protein-lysine methyltransferase that selectively trimethylates the flavoprotein ETFB in mitochondria. Thereby, may negatively regulate the function of ETFB in electron transfer from Acyl-CoA dehydrogenases to the main respiratory chain. In Xenopus laevis (African clawed frog), this protein is Electron transfer flavoprotein beta subunit lysine methyltransferase (etfbkmt).